Consider the following 547-residue polypeptide: MAFEELLDKVGGFGPFQLWNVALLALPRVLLPMHFLLPIFLTAVPAHRCALPGAPANFSHQDAWLEAHLPREPDGRFSSCLRFTHSRALPNTTLWGLGQSPGEQLEGEPSTVPCPQGWEYDHSEFSSTIATEWDLVCEQKGLNRATSTFFFAGVLVGAVAFGYLSDRFGRRRLLLVAYVSALVLGLVSAASVSYTMFAITRTLTGTALAGFTIIVMPLELEWLDVGHRTVAGVLSSTFWTGGVMLLALVGYLIRDWRWLLLAVTLPCAPGILSLWWVPESARWLLTQGRVEDAHRYLLRCARLNGRPVGEDGLSREALSKVAAAERVVRRPSYVDLFRTPRLRHISLCCMVVWFGVNFSYYGLSLDVSGLGLNVYQTQLLFGAVELPSKLLVYLSVRHAGRRLTLAGTLLGTSLSLGFRLLVSSEMKSWSTALAVLGKGFSEAAFTTAYLFTSELYPTVLRQTGMGLTALVGRLGGSLAPLAALLDGVWLSLPKLAYGGIALLAACTALLLPETKQAQLPETIQDVERKSAPSSLQEEEMPMKQVQD.

The next 12 helical transmembrane spans lie at 21 to 41, 145 to 165, 173 to 193, 203 to 223, 233 to 253, 258 to 278, 345 to 365, 374 to 396, 403 to 423, 431 to 451, 465 to 485, and 492 to 512; these read VALL…PIFL, ATST…GYLS, LLLV…ASVS, LTGT…LEWL, VLSS…GYLI, WLLL…WWVP, ISLC…GLSL, VYQT…YLSV, LTLA…LLVS, TALA…AYLF, MGLT…AALL, and LPKL…LLLP. The interval 521–547 is disordered; the sequence is ETIQDVERKSAPSSLQEEEMPMKQVQD.

The protein belongs to the major facilitator (TC 2.A.1) superfamily. Organic cation transporter (TC 2.A.1.19) family.

The protein resides in the basolateral cell membrane. The protein localises to the apical cell membrane. Its subcellular location is the cell membrane. It carries out the reaction orotate(out) + L-glutamate(in) = orotate(in) + L-glutamate(out). The enzyme catalyses 3',5'-cyclic GMP(in) = 3',5'-cyclic GMP(out). It catalyses the reaction GMP(in) = GMP(out). The catalysed reaction is 2'-deoxyguanosine(in) = 2'-deoxyguanosine(out). It carries out the reaction GDP(in) = GDP(out). The enzyme catalyses guanosine(in) = guanosine(out). It catalyses the reaction GTP(in) = GTP(out). The catalysed reaction is 3',5'-cyclic AMP(in) = 3',5'-cyclic AMP(out). It carries out the reaction creatinine(in) = creatinine(out). The enzyme catalyses prostaglandin E2(out) = prostaglandin E2(in). It catalyses the reaction 2-oxoglutarate(in) = 2-oxoglutarate(out). The catalysed reaction is glutarate(in) = glutarate(out). It carries out the reaction urate(out) = urate(in). The enzyme catalyses estrone 3-sulfate(out) = estrone 3-sulfate(in). Functions as a Na(+)-independent bidirectional multispecific transporter. Contributes to the renal and hepatic elimination of endogenous organic compounds from the systemic circulation into the urine and bile, respectively. Capable of transporting a wide range of purine and pyrimidine nucleobases, nucleosides and nucleotides, with cGMP, 2'deoxyguanosine and GMP being the preferred substrates. Functions as a pH- and chloride-independent cGMP bidirectional facilitative transporter that can regulate both intracellular and extracellular levels of cGMP and may be involved in cGMP signaling pathways. Mediates orotate/glutamate bidirectional exchange and most likely display a physiological role in hepatic release of glutamate into the blood. Involved in renal secretion and possible reabsorption of creatinine. Able to uptake prostaglandin E2 (PGE2) and may contribute to PGE2 renal excretion. Also transports alpha-ketoglutarate and urate. Apart from the orotate/glutamate exchange, the counterions for the uptake of other SLC22A7/OAT2 substrates remain to be identified. The chain is Solute carrier family 22 member 7 (SLC22A7) from Sus scrofa (Pig).